The sequence spans 640 residues: 1-deoxy-D-xylulose-5-phosphate synthase (640 aa).

Thiamine diphosphate is bound by residues His-72 and 113 to 115 (GHA). Asp-144 is a binding site for Mg(2+). Thiamine diphosphate-binding positions include 145–146 (GA), Asn-174, Tyr-287, and Glu-370. Asn-174 is a binding site for Mg(2+).

This sequence belongs to the transketolase family. DXPS subfamily. As to quaternary structure, homodimer. Mg(2+) is required as a cofactor. Thiamine diphosphate serves as cofactor.

It carries out the reaction D-glyceraldehyde 3-phosphate + pyruvate + H(+) = 1-deoxy-D-xylulose 5-phosphate + CO2. It functions in the pathway metabolic intermediate biosynthesis; 1-deoxy-D-xylulose 5-phosphate biosynthesis; 1-deoxy-D-xylulose 5-phosphate from D-glyceraldehyde 3-phosphate and pyruvate: step 1/1. Functionally, catalyzes the acyloin condensation reaction between C atoms 2 and 3 of pyruvate and glyceraldehyde 3-phosphate to yield 1-deoxy-D-xylulose-5-phosphate (DXP). This Synechococcus sp. (strain RCC307) protein is 1-deoxy-D-xylulose-5-phosphate synthase.